Reading from the N-terminus, the 334-residue chain is Heat-inducible transcription repressor HrcA (334 aa).

Belongs to the HrcA family.

Functionally, negative regulator of class I heat shock genes (grpE-dnaK-dnaJ and groELS operons). Prevents heat-shock induction of these operons. This Bordetella bronchiseptica (strain ATCC BAA-588 / NCTC 13252 / RB50) (Alcaligenes bronchisepticus) protein is Heat-inducible transcription repressor HrcA.